The sequence spans 94 residues: Co-chaperonin GroES (94 aa).

Belongs to the GroES chaperonin family. In terms of assembly, heptamer of 7 subunits arranged in a ring. Interacts with the chaperonin GroEL.

Its subcellular location is the cytoplasm. In terms of biological role, together with the chaperonin GroEL, plays an essential role in assisting protein folding. The GroEL-GroES system forms a nano-cage that allows encapsulation of the non-native substrate proteins and provides a physical environment optimized to promote and accelerate protein folding. GroES binds to the apical surface of the GroEL ring, thereby capping the opening of the GroEL channel. This chain is Co-chaperonin GroES, found in Halothermothrix orenii (strain H 168 / OCM 544 / DSM 9562).